Reading from the N-terminus, the 151-residue chain is SKVAELANAVVSNADQKDLLRMSWGVLSVDMEGTGLMLMANLFKTSPSAKGKFARLGDVSAGKDNSKLRGHSITLMYALQNFVDALDDVERLKCVVEKFAVNHINRQISADEFGEIVGPLRQTLKARMGNYFDEDTVSAWASLVAVVQASL.

S1 is modified (N-acetylserine). The region spanning 11-151 is the Globin domain; it reads VSNADQKDLL…SLVAVVQASL (141 aa). H103 provides a ligand contact to heme b.

This sequence belongs to the globin family. In terms of assembly, heterotetramer of two alpha chains and two beta chains.

The polypeptide is Globin-2 B chain (Anadara inaequivalvis (Inequivalve ark)).